Here is a 35-residue protein sequence, read N- to C-terminus: Tau/kappa-theraphotoxin-Pc1a (35 aa).

3 disulfides stabilise this stretch: Cys3/Cys17, Cys10/Cys22, and Cys16/Cys29. Phenylalanine amide is present on Phe35.

This sequence belongs to the neurotoxin 10 (Hwtx-1) family. 62 (Vatx) subfamily. In terms of tissue distribution, expressed by the venom gland.

Its subcellular location is the secreted. Selectively activates mammalian TRPV1, the capsaicin receptor, a non-selective cation channel expressed by sensory neurons of the pain pathway. Is less potent than VaTx2 and VaTx3. Interacts with distinct regions of the channel than capsaicin, since it only acts on the extracellular face of the channel, and capsaicin binds to the cytosolic side. Also activates avian TRPV1, which is insensitive to capsaicin. Significantly inhibits potassium channels Kv2.1/KCNB1. This is Tau/kappa-theraphotoxin-Pc1a from Psalmopoeus cambridgei (Trinidad chevron tarantula).